A 287-amino-acid chain; its full sequence is uncharacterized protein (287 aa).

This is an uncharacterized protein from Methanocaldococcus jannaschii (strain ATCC 43067 / DSM 2661 / JAL-1 / JCM 10045 / NBRC 100440) (Methanococcus jannaschii).